Consider the following 187-residue polypeptide: Frataxin, mitochondrial (187 aa).

This sequence belongs to the frataxin family. As to quaternary structure, monomer. Oligomer. Interacts with NIFS1.

It localises to the mitochondrion. It carries out the reaction 4 Fe(2+) + O2 + 4 H(+) = 4 Fe(3+) + 2 H2O. In terms of biological role, promotes the biosynthesis of heme as well as the assembly and repair of iron-sulfur clusters by delivering Fe(2+) to proteins involved in these pathways. May play a role in the protection against iron-catalyzed oxidative stress through its ability to catalyze the oxidation of Fe(2+) to Fe(3+). May be able to store large amounts of the metal in the form of a ferrihydrite mineral by oligomerization. Binds to the mitochondrial cysteine desulfurase NIFS1 and increases its activity. The protein is Frataxin, mitochondrial (FH) of Arabidopsis thaliana (Mouse-ear cress).